The primary structure comprises 88 residues: UPF0250 protein PM1928 (88 aa).

This sequence belongs to the UPF0250 family.

In Pasteurella multocida (strain Pm70), this protein is UPF0250 protein PM1928.